Consider the following 261-residue polypeptide: MLVVLFTVALLALSSAQGPREENQNQIQIPNQRPPPSGFQPRPPVNGSQQGPPPPGGPQPRPPQGPPPPGGPQPRPPQGPPPPGGPQPRPPQGPPPPGGPQQRPPQGPPPPGGPQQRPPQGPPPPGGPQPRPPQGPPPPGGPQLRPPQGPPPPAGPQPRPPQGPPPPAGPQPRPPQGPPPTGPQPRPTQGPPPTGGPQQRPPQGPPPPGGPQPRPPQGPPPPGGPQPSPTQGPPPTGGPQQTPPLAGNTQGPPQGRPQGPR.

The first 15 residues, 1-15, serve as a signal peptide directing secretion; that stretch reads MLVVLFTVALLALSS. Residues 15–261 are disordered; it reads SAQGPREENQ…PPQGRPQGPR (247 aa). Pro residues-rich tracts occupy residues 32-44 and 51-237; these read QRPPPSGFQPRPP and GPPP…PPTG. Residues 238-261 show a composition bias toward low complexity; that stretch reads GPQQTPPLAGNTQGPPQGRPQGPR.

It is found in the secreted. The sequence is that of Proline-rich protein HaeIII subfamily 1 (Prh1) from Mus musculus (Mouse).